The sequence spans 104 residues: Cytochrome c6 (104 aa).

Residues 1–20 (MKSLLTFILTTIFCIQQVWA) form the signal peptide. Heme c-binding residues include Cys34, Cys37, His38, and Met78.

It belongs to the cytochrome c family. PetJ subfamily. In terms of assembly, monomer. In terms of processing, binds 1 heme c group covalently per subunit.

It is found in the plastid. It localises to the chloroplast thylakoid lumen. Its function is as follows. Functions as an electron carrier between membrane-bound cytochrome b6-f and photosystem I in oxygenic photosynthesis. This is Cytochrome c6 from Cyanidioschyzon merolae (strain NIES-3377 / 10D) (Unicellular red alga).